Reading from the N-terminus, the 116-residue chain is Transcription initiation factor IIA subunit 2 (116 aa).

Belongs to the TFIIA subunit 2 family. As to quaternary structure, TFIIA is a heterodimer composed of the large TOA1 and the small TOA2 subunits.

The protein localises to the nucleus. Its function is as follows. TFIIA is a component of the transcription machinery of RNA polymerase II and plays an important role in transcriptional activation. TFIIA in a complex with tbp mediates transcriptional activity. The chain is Transcription initiation factor IIA subunit 2 (TOA2) from Pyricularia oryzae (strain 70-15 / ATCC MYA-4617 / FGSC 8958) (Rice blast fungus).